The following is a 688-amino-acid chain: ATP-dependent RNA helicase ded1 (688 aa).

Composition is skewed to polar residues over residues 1-15 (MADQLSSGMGNLSID) and 55-67 (GLNNSAWAGNNNY). The interval 1-170 (MADQLSSGMG…TPDDPSKQHT (170 aa)) is disordered. Residues 88 to 102 (GFEGQQGAGWGGPRP) show a composition bias toward gly residues. Low complexity predominate over residues 103–114 (QGGFNPNAYRGN). Residues 115 to 129 (AGAGAGAGAGGGGGS) show a composition bias toward gly residues. Positions 194–222 (LTFSNPPLDNHLISNIQLARYNVPTPVQK) match the Q motif motif. The Helicase ATP-binding domain maps to 225–416 (IPIVMGGRDL…RDFLKDYIFL (192 aa)). ATP is bound at residue 238–245 (AQTGSGKT). Positions 360–363 (DEAD) match the DEAD box motif. The 161-residue stretch at 427–587 (NITQKVEYVE…EVPAFLETIA (161 aa)) folds into the Helicase C-terminal domain. Residues 590–615 (SSFGGGRGGRGGGRGGGRGRTQTADY) form a disordered region. A compositionally biased stretch (gly residues) spans 592-608 (FGGGRGGRGGGRGGGRG).

Belongs to the DEAD box helicase family. DDX3/DED1 subfamily.

It localises to the cytoplasm. It catalyses the reaction ATP + H2O = ADP + phosphate + H(+). Functionally, ATP-binding RNA helicase involved in translation initiation. Remodels RNA in response to ADP and ATP concentrations by facilitating disruption, but also formation of RNA duplexes. The protein is ATP-dependent RNA helicase ded1 (drh-9) of Neurospora crassa (strain ATCC 24698 / 74-OR23-1A / CBS 708.71 / DSM 1257 / FGSC 987).